The primary structure comprises 597 residues: Cytosolic Fe-S cluster assembly factor nar1 (597 aa).

Cysteine 20 is a binding site for [4Fe-4S] cluster. The segment at glutamate 25–valine 46 is disordered. The [4Fe-4S] cluster site is built by cysteine 61, cysteine 64, cysteine 67, cysteine 208, and cysteine 263. Positions arginine 424–proline 449 are disordered. The span at alanine 432–serine 444 shows a compositional bias: polar residues. Residues cysteine 464 and cysteine 468 each coordinate [4Fe-4S] cluster.

It belongs to the NARF family.

Component of the cytosolic Fe/S protein assembly machinery. Required for maturation of extramitochondrial Fe/S proteins. May play a role in the transfer of pre-assembled Fe/S clusters to target apoproteins. This chain is Cytosolic Fe-S cluster assembly factor nar1 (nar1), found in Aspergillus fumigatus (strain ATCC MYA-4609 / CBS 101355 / FGSC A1100 / Af293) (Neosartorya fumigata).